We begin with the raw amino-acid sequence, 2278 residues long: Protein Ycf2 (2278 aa).

1632–1639 (GSIGTGRS) contacts ATP.

Belongs to the Ycf2 family.

It is found in the plastid. Its subcellular location is the chloroplast stroma. Probable ATPase of unknown function. Its presence in a non-photosynthetic plant (Epifagus virginiana) and experiments in tobacco indicate that it has an essential function which is probably not related to photosynthesis. This chain is Protein Ycf2, found in Solanum bulbocastanum (Wild potato).